We begin with the raw amino-acid sequence, 261 residues long: General secretion pathway protein N (261 aa).

Over 1–10 (MRLEMIGLRT) the chain is Cytoplasmic. The chain crosses the membrane as a helical span at residues 11–31 (WLLATVVGWALLVCVLAVAGL). Over 32–261 (GKRVELLPDD…QGGSTPGQTQ (230 aa)) the chain is Periplasmic. Residues 158 to 261 (VFNGQGGQPP…QGGSTPGQTQ (104 aa)) are disordered. Residues 179–200 (AVPPLPPNVPPAPATPAPPPAE) are compositionally biased toward pro residues. Positions 201-211 (VPQQQPGGQAP) are enriched in low complexity. Over residues 227–244 (RPSDEQMRAIRERIEARR) the composition is skewed to basic and acidic residues.

As to quaternary structure, binds to XpsD.

It is found in the cell inner membrane. In terms of biological role, involved in a general secretion pathway (GSP) for the export of proteins. The polypeptide is General secretion pathway protein N (xpsN) (Xanthomonas campestris pv. campestris (strain ATCC 33913 / DSM 3586 / NCPPB 528 / LMG 568 / P 25)).